The chain runs to 383 residues: Na(+)/H(+) antiporter (383 aa).

The next 12 membrane-spanning stretches (helical) occupy residues 1–21 (MEFI…SHIS), 24–44 (FGIP…QAGL), 51–71 (ILVH…AGLE), 83–103 (PGMF…WLTG), 112–132 (EAIF…VEVL), 145–165 (TILG…SFSL), 186–206 (LFYF…LMSL), 216–236 (IIIM…LIGL), 262–282 (VEAL…GLEV), 291–311 (ILFI…GGYI), 323–343 (ALMV…ILQI), and 353–373 (HYYS…PLIL).

It belongs to the monovalent cation:proton antiporter 2 (CPA2) transporter (TC 2.A.37) family.

The protein localises to the cell membrane. Na(+)/H(+) antiporter that extrudes sodium in exchange for external protons. Can also transport lithium. This chain is Na(+)/H(+) antiporter (napA), found in Enterococcus hirae.